The following is a 525-amino-acid chain: tRNA-splicing endonuclease subunit Sen54 (525 aa).

M1 bears the N-acetylmethionine mark. A disordered region spans residues 1–46; the sequence is MEPEPEPGSVEVPAGRVLSASELRAARSRSQKLPQRSHGPKDFLPD. A compositionally biased stretch (low complexity) spans 7-23; that stretch reads PGSVEVPAGRVLSASEL. S178 carries the post-translational modification Phosphoserine. Y180 bears the Phosphotyrosine mark. Positions 220–232 are enriched in low complexity; the sequence is LPPVSLAASSSPA. The interval 220–273 is disordered; it reads LPPVSLAASSSPACDQSSQYPEEKSQDSSPRQGSELPLQFLGSSEPCSDLARED.

The protein belongs to the SEN54 family. TRNA splicing endonuclease is a heterotetramer composed of TSEN2, TSEN15, TSEN34/LENG5 and TSEN54. tRNA splicing endonuclease complex also contains proteins of the pre-mRNA 3'-end processing machinery such as CLP1, CPSF1, CPSF4 and CSTF2.

It localises to the nucleus. Its subcellular location is the nucleolus. Non-catalytic subunit of the tRNA-splicing endonuclease complex, a complex responsible for identification and cleavage of the splice sites in pre-tRNA. It cleaves pre-tRNA at the 5' and 3' splice sites to release the intron. The products are an intron and two tRNA half-molecules bearing 2',3' cyclic phosphate and 5'-OH termini. There are no conserved sequences at the splice sites, but the intron is invariably located at the same site in the gene, placing the splice sites an invariant distance from the constant structural features of the tRNA body. The tRNA splicing endonuclease is also involved in mRNA processing via its association with pre-mRNA 3'-end processing factors, establishing a link between pre-tRNA splicing and pre-mRNA 3'-end formation, suggesting that the endonuclease subunits function in multiple RNA-processing events. The protein is tRNA-splicing endonuclease subunit Sen54 (Tsen54) of Mus musculus (Mouse).